Consider the following 744-residue polypeptide: Cullin-1 (744 aa).

The region spanning 674 to 736 (DRRYAIDASI…RDYLERDKDN (63 aa)) is the Cullin neddylation domain.

It belongs to the cullin family. In terms of assembly, part of a SCF (SKP1-CUL1-F-box protein) E3 ubiquitin-protein ligase complex. Is able to form the SCF complex together with SKP1 and the rice black streaked dwarf virus RBSDV protein P7-2. Interacts with D3. Neddylated (rubylated). Deneddylation occurs upon interaction with the COP9 signalosome (CSN) complex. In terms of tissue distribution, expressed in dry seeds and coleoptiles.

Its function is as follows. Involved in ubiquitination and subsequent proteasomal degradation of target proteins. The sequence is that of Cullin-1 from Oryza sativa subsp. japonica (Rice).